We begin with the raw amino-acid sequence, 244 residues long: Leucyl/phenylalanyl-tRNA--protein transferase (244 aa).

This sequence belongs to the L/F-transferase family.

It is found in the cytoplasm. The enzyme catalyses N-terminal L-lysyl-[protein] + L-leucyl-tRNA(Leu) = N-terminal L-leucyl-L-lysyl-[protein] + tRNA(Leu) + H(+). It catalyses the reaction N-terminal L-arginyl-[protein] + L-leucyl-tRNA(Leu) = N-terminal L-leucyl-L-arginyl-[protein] + tRNA(Leu) + H(+). It carries out the reaction L-phenylalanyl-tRNA(Phe) + an N-terminal L-alpha-aminoacyl-[protein] = an N-terminal L-phenylalanyl-L-alpha-aminoacyl-[protein] + tRNA(Phe). Functions in the N-end rule pathway of protein degradation where it conjugates Leu, Phe and, less efficiently, Met from aminoacyl-tRNAs to the N-termini of proteins containing an N-terminal arginine or lysine. In Janthinobacterium sp. (strain Marseille) (Minibacterium massiliensis), this protein is Leucyl/phenylalanyl-tRNA--protein transferase.